The primary structure comprises 512 residues: cAMP-dependent protein kinase catalytic subunit (512 aa).

Positions Met1–Gly15 are enriched in polar residues. 2 disordered regions span residues Met1–Trp79 and Ile118–Asp166. Residues Ser16 to Leu27 are compositionally biased toward low complexity. Polar residues-rich tracts occupy residues Asn32–Gly52 and Ser62–Trp79. Residues Ser143–Asp166 show a composition bias toward basic and acidic residues. The Protein kinase domain occupies Phe201 to Phe456. ATP is bound by residues Leu207 to Val215 and Lys230. Asp324 acts as the Proton acceptor in catalysis. Thr356 carries the phosphothreonine modification. Residues Arg457–Phe512 form the AGC-kinase C-terminal domain.

This sequence belongs to the protein kinase superfamily. AGC Ser/Thr protein kinase family. cAMP subfamily.

It catalyses the reaction L-seryl-[protein] + ATP = O-phospho-L-seryl-[protein] + ADP + H(+). The enzyme catalyses L-threonyl-[protein] + ATP = O-phospho-L-threonyl-[protein] + ADP + H(+). Its activity is regulated as follows. Activated by cAMP. The chain is cAMP-dependent protein kinase catalytic subunit (pka1) from Schizosaccharomyces pombe (strain 972 / ATCC 24843) (Fission yeast).